Reading from the N-terminus, the 342-residue chain is Tetraacyldisaccharide 4'-kinase (342 aa).

68–75 (TVGGTGKT) serves as a coordination point for ATP.

It belongs to the LpxK family.

The catalysed reaction is a lipid A disaccharide + ATP = a lipid IVA + ADP + H(+). It functions in the pathway glycolipid biosynthesis; lipid IV(A) biosynthesis; lipid IV(A) from (3R)-3-hydroxytetradecanoyl-[acyl-carrier-protein] and UDP-N-acetyl-alpha-D-glucosamine: step 6/6. Transfers the gamma-phosphate of ATP to the 4'-position of a tetraacyldisaccharide 1-phosphate intermediate (termed DS-1-P) to form tetraacyldisaccharide 1,4'-bis-phosphate (lipid IVA). The polypeptide is Tetraacyldisaccharide 4'-kinase (Burkholderia multivorans (strain ATCC 17616 / 249)).